Here is a 717-residue protein sequence, read N- to C-terminus: F-box only protein 42 (717 aa).

Residues 1 to 30 show a composition bias toward acidic residues; that stretch reads MASSSDSEDDSFMAVDQEETVLEGTMDQDE. The segment at 1-34 is disordered; sequence MASSSDSEDDSFMAVDQEETVLEGTMDQDEEPHP. The F-box domain occupies 44–93; sequence NRSMSELPEEVLEYILSFLSPYQEHKTAALVCKQWYRLIKGVAHQCYHGF. Kelch repeat units lie at residues 132-184, 186-242, 244-293, and 295-342; these read SMYV…VYKD, LVLF…VIDD, MIVF…VIDD, and TILI…LWCH. Positions 361–474 are disordered; the sequence is RAPLSPSLNS…PSTPSAPEGY (114 aa). Residues 363-376 show a composition bias toward low complexity; that stretch reads PLSPSLNSRPSPIS. Ser-365 and Ser-373 each carry phosphoserine. At Thr-378 the chain carries Phosphothreonine. Composition is skewed to polar residues over residues 416–426 and 455–469; these read QRQTPSGSREG and SLDSPVQAISPSTPS. Ser-552 bears the Phosphoserine mark. The segment covering 570–596 has biased composition (low complexity); that stretch reads GPSASAALSPPLGSSPGSPGSQSLSSG. A disordered region spans residues 570–631; sequence GPSASAALSP…GHHPPQSLNV (62 aa).

Component of some SCF complex, composed of CUL1, SKP1, RBX1 and FBXO42. Interacts (via the kelch domain) with p53/TP53; interaction is direct.

Functionally, substrate-recognition component of some SCF (SKP1-CUL1-F-box protein)-type E3 ubiquitin ligase complex. Specifically recognizes p53/TP53, promoting its ubiquitination and degradation. This chain is F-box only protein 42 (FBXO42), found in Homo sapiens (Human).